Reading from the N-terminus, the 168-residue chain is Large ribosomal subunit protein uL10 (168 aa).

This sequence belongs to the universal ribosomal protein uL10 family. Part of the ribosomal stalk of the 50S ribosomal subunit. The N-terminus interacts with L11 and the large rRNA to form the base of the stalk. The C-terminus forms an elongated spine to which L12 dimers bind in a sequential fashion forming a multimeric L10(L12)X complex.

Its function is as follows. Forms part of the ribosomal stalk, playing a central role in the interaction of the ribosome with GTP-bound translation factors. This Clostridioides difficile (strain 630) (Peptoclostridium difficile) protein is Large ribosomal subunit protein uL10.